We begin with the raw amino-acid sequence, 232 residues long: MHPVDKKSLALKIYEATGYQFRDLDLLLEALTHPRLSYKSAANYERLEFLGDAVLSMTVSEMLYRLFPDDDEGCLTRKRTALVRGSEVVEIARSIGLGELILMSGGERTCGGSDNPGTLENALEALIGAMYMDGGPEAYRSFIHKHWLARAQHMSYTPPQDPKTALQEWVQGRGWAMPLYKLVSKSGPEHKPVFAVEVSIQEHGNVLGTGSSKKLAEQEAAKLMLKKITELP.

Residues 10 to 135 (ALKIYEATGY…LIGAMYMDGG (126 aa)) form the RNase III domain. Glu48 provides a ligand contact to Mg(2+). Residue Asp52 is part of the active site. Residues Asn121 and Glu124 each coordinate Mg(2+). The active site involves Glu124. The region spanning 161–230 (DPKTALQEWV…AKLMLKKITE (70 aa)) is the DRBM domain.

It belongs to the ribonuclease III family. As to quaternary structure, homodimer. It depends on Mg(2+) as a cofactor.

It is found in the cytoplasm. The enzyme catalyses Endonucleolytic cleavage to 5'-phosphomonoester.. Functionally, digests double-stranded RNA. Involved in the processing of primary rRNA transcript to yield the immediate precursors to the large and small rRNAs (23S and 16S). Processes some mRNAs, and tRNAs when they are encoded in the rRNA operon. Processes pre-crRNA and tracrRNA of type II CRISPR loci if present in the organism. This is Ribonuclease 3 from Anaplasma marginale (strain St. Maries).